Reading from the N-terminus, the 317-residue chain is tRNA dimethylallyltransferase (317 aa).

Residue Gly-19–Ser-26 participates in ATP binding. Position 21 to 26 (Thr-21 to Ser-26) interacts with substrate. Positions Asp-44–Gln-47 are interaction with substrate tRNA.

Belongs to the IPP transferase family. Monomer. Mg(2+) serves as cofactor.

The catalysed reaction is adenosine(37) in tRNA + dimethylallyl diphosphate = N(6)-dimethylallyladenosine(37) in tRNA + diphosphate. Catalyzes the transfer of a dimethylallyl group onto the adenine at position 37 in tRNAs that read codons beginning with uridine, leading to the formation of N6-(dimethylallyl)adenosine (i(6)A). The sequence is that of tRNA dimethylallyltransferase from Methylorubrum extorquens (strain PA1) (Methylobacterium extorquens).